The following is a 298-amino-acid chain: Cyclin-dependent kinase 1 (298 aa).

Ser-2 is subject to N-acetylserine. The 288-residue stretch at 8–295 folds into the Protein kinase domain; sequence YKRLEKVGEG…ARRAAIHPYF (288 aa). ATP-binding positions include 14-22 and Lys-40; that span reads VGEGTYGVV. Phosphotyrosine is present on Tyr-19. The active-site Proton acceptor is Asp-136. The residue at position 169 (Thr-169) is a Phosphothreonine.

This sequence belongs to the protein kinase superfamily. CMGC Ser/Thr protein kinase family. CDC2/CDKX subfamily. Forms a stable but non-covalent complex with the CKS1 protein and with a cyclin.

The catalysed reaction is L-seryl-[protein] + ATP = O-phospho-L-seryl-[protein] + ADP + H(+). It catalyses the reaction L-threonyl-[protein] + ATP = O-phospho-L-threonyl-[protein] + ADP + H(+). With respect to regulation, phosphorylation at Thr-18 or Tyr-19 inactivates the enzyme, while phosphorylation at Thr-169 activates it. In terms of biological role, cyclin-dependent kinase that acts as a master regulator of the mitotic and meiotic cell cycles. Required to drive the G1-S transition. More than 200 substrates have been identified. Substrate specificity is in part regulated by the bound cyclin protein. Phosphorylates YTA7 during S-phase to promote transcription of histones. May phosphorylate CNN1, to contribute to the enrichment of CNN1 on anaphase kinetochores. The polypeptide is Cyclin-dependent kinase 1 (Saccharomyces cerevisiae (strain ATCC 204508 / S288c) (Baker's yeast)).